We begin with the raw amino-acid sequence, 267 residues long: tRNA pseudouridine synthase A (267 aa).

Asp-55 (nucleophile) is an active-site residue. Tyr-111 contacts substrate.

It belongs to the tRNA pseudouridine synthase TruA family.

It carries out the reaction uridine(38/39/40) in tRNA = pseudouridine(38/39/40) in tRNA. In terms of biological role, formation of pseudouridine at positions 38, 39 and 40 in the anticodon stem and loop of transfer RNAs. This Thermococcus onnurineus (strain NA1) protein is tRNA pseudouridine synthase A.